Here is a 319-residue protein sequence, read N- to C-terminus: Lipase 1 (319 aa).

Ser189 serves as the catalytic Nucleophile. The Ca(2+) site is built by Asp314 and Asp317.

The catalysed reaction is a triacylglycerol + H2O = a diacylglycerol + a fatty acid + H(+). The polypeptide is Lipase 1 (lip1) (Moraxella sp. (strain TA144)).